The following is a 211-amino-acid chain: Orotidine 5'-phosphate decarboxylase (211 aa).

Substrate-binding positions include Asp-7, Lys-29, 57-66, Ser-109, 162-172, Gly-185, and Arg-186; these read DLKLADIPNT and PGIGAQGGSPV. Lys-59 serves as the catalytic Proton donor.

It belongs to the OMP decarboxylase family. Type 1 subfamily. Homodimer.

The enzyme catalyses orotidine 5'-phosphate + H(+) = UMP + CO2. The protein operates within pyrimidine metabolism; UMP biosynthesis via de novo pathway; UMP from orotate: step 2/2. Functionally, catalyzes the decarboxylation of orotidine 5'-monophosphate (OMP) to uridine 5'-monophosphate (UMP). The polypeptide is Orotidine 5'-phosphate decarboxylase (Pyrococcus furiosus (strain ATCC 43587 / DSM 3638 / JCM 8422 / Vc1)).